A 154-amino-acid chain; its full sequence is Transcriptional repressor NrdR (154 aa).

A zinc finger spans residues cysteine 3–cysteine 34. The ATP-cone domain maps to valine 46–aspartate 136.

It belongs to the NrdR family. It depends on Zn(2+) as a cofactor.

Its function is as follows. Negatively regulates transcription of bacterial ribonucleotide reductase nrd genes and operons by binding to NrdR-boxes. This Mycobacterium leprae (strain Br4923) protein is Transcriptional repressor NrdR.